Here is a 1061-residue protein sequence, read N- to C-terminus: MGDPGSEIIESVPPAGPEASESTTDENEDDIQFVSEGPLRPVLEYIDLVSSDDEEPSTSYTDENIKRKDHIDYQKDKVALTLARLARHVEVEKQQKEEKNRAFREKIDFQHAHGLQELEFIRGHSDTEAARLCVDQWLKMPGLKTGTINCGTKSSFRRGGHTWVSGKPILCPIMHCNKEFDNGHLLLGHLKRFDHSPCDPTITLHGPFFSSFACVVCYKKFVTQQQYRDHLFDKEATDDGHNNNLLPQIIQCFACPNCFLLFSRKEECSKHMSGKNHFHQSFKLGDNKGIAHPISFPSFAKKLLISLCKDVPFQVKCVACHKTLRSHMELTAHFRVHCRNAGPVAVAEKSITQVAEKFILRGYCPDCNQVFVDETSTQNHKQNSGHKVRVINSVEESVLLYCHSSEGNKDPSSDLHLLLDQSKFSSLKRTMSIKESSSLECIAIPKKKMNLKDKSHEGVACVQKEKSVVKTWFCECNQRFPSEDAVEKHVFSANTMGYKCVVCGKVCDDSGVIRLHMSRIHGGAHLNNFLFWCRTCKKELTRKDTIMAHVTEFHNGHRYFYEMDEVEGETLPSSSTTLDNLTANKPSSAITVIDHSPANSSPRGKWQCRICEDMFDSQEYVKQHCMSLASHKFHRYSCAHCRKPFHKIETLYRHCQDEHDNEIKIKYFCGLCDLIFNVEEAFLSHYEEHHSIDYVFVSEKTETSIKTEDDFPVIETSNQLTCGCRESYICKVNRKEDYSRCLQIMLDKGKLWFRCSLCSATAQNLTDMNTHIHQVHKEKSDEEEQQYVIKCGTCTKAFHDPESAQQHFHRKHCFLQKPSVAHFGSEKSNLYKFTASASHTERKLKQAINYSKSLDMEKGVENDLSYQNIEEEIVELPDLDYLRTMTHIVFVDFDNWSNFFGHLPGHLNQGTFIWGFQGGNTNWKPPLNCKIYNYLNRIGCFFLHPRCSKRKDAADFAICMHAGRLDEQLPKQIPFTILSGDQGFLELENQFKKTQRPAHILNPHHLEGDMMCALLNSISDTTKECDSDDNMGAKNTSIGEEFISTEDVELEEAIRRSLEEM.

Residues 1–38 (MGDPGSEIIESVPPAGPEASESTTDENEDDIQFVSEGP) are disordered. Positions 1–246 (MGDPGSEIIE…TDDGHNNNLL (246 aa)) are sufficient for E3 SUMO-protein ligase activity. Residues 1–344 (MGDPGSEIIE…RVHCRNAGPV (344 aa)) form an important for interaction with SUMO1 and SUMO2 region. The interval 30-37 (DIQFVSEG) is interaction with SUMO2 1. The PLRP motif lies at 38–41 (PLRP). Residues 42–50 (VLEYIDLVS) are interaction with SUMO2 2. Glycyl lysine isopeptide (Lys-Gly) (interchain with G-Cter in SUMO2) cross-links involve residues lysine 75, lysine 77, lysine 106, isoleucine 121, alanine 130, leucine 138, lysine 139, lysine 144, and lysine 153. Serine 155 carries the post-translational modification Phosphoserine. The residue at position 158 (arginine 158) is an Omega-N-methylarginine. Residues valine 164 and lysine 167 each participate in a glycyl lysine isopeptide (Lys-Gly) (interchain with G-Cter in SUMO2) cross-link. An important for interaction with SMAD4 region spans residues 168 to 525 (PILCPIMHCN…HMSRIHGGAH (358 aa)). The C2H2-type 1 zinc-finger motif lies at 169–195 (ILCPIMHCNKEFDNGHLLLGHLKRFDH). Residues glutamine 226, glycine 240, proline 247, serine 263, lysine 270, lysine 275, lysine 283, aspartate 286, lysine 288, proline 293, lysine 301, and lysine 309 each participate in a glycyl lysine isopeptide (Lys-Gly) (interchain with G-Cter in SUMO2) cross-link. The C2H2-type 2 zinc finger occupies 253–277 (FACPNCFLLFSRKEECSKHMSGKNH). The C2H2-type 3 zinc finger occupies 315–337 (VKCVACHKTLRSHMELTAHFRVH). Lysine 357 is covalently cross-linked (Glycyl lysine isopeptide (Lys-Gly) (interchain with G-Cter in SUMO2)). A C2H2-type 4 zinc finger spans residues 362–386 (GYCPDCNQVFVDETSTQNHKQNSGH). Residue lysine 423 forms a Glycyl lysine isopeptide (Lys-Gly) (interchain with G-Cter in SUMO2) linkage. Phosphoserine is present on serine 432. Residues lysine 434, lysine 446, lysine 452, lysine 454, lysine 464, phenylalanine 473, valine 490, cysteine 500, lysine 505, aspartate 508, glycine 522, tryptophan 532, lysine 543, and lysine 585 each participate in a glycyl lysine isopeptide (Lys-Gly) (interchain with G-Cter in SUMO2) cross-link. Residues 498-521 (YKCVVCGKVCDDSGVIRLHMSRIH) form a C2H2-type 5 zinc finger. The C2H2-type 6 zinc finger occupies 531–554 (FWCRTCKKELTRKDTIMAHVTEFH). The C2H2-type 7; atypical zinc finger occupies 606–631 (WQCRICEDMFDSQEYVKQHCMSLASH). Residues lysine 632, lysine 647, and lysine 664 each participate in a glycyl lysine isopeptide (Lys-Gly) (interchain with G-Cter in SUMO2) cross-link. The C2H2-type 8 zinc finger occupies 636 to 659 (YSCAHCRKPFHKIETLYRHCQDEH). The C2H2-type 9 zinc-finger motif lies at 667–690 (YFCGLCDLIFNVEEAFLSHYEEHH). Lysine 706 participates in a covalent cross-link: Glycyl lysine isopeptide (Lys-Gly) (interchain with G-Cter in SUMO1); alternate. A Glycyl lysine isopeptide (Lys-Gly) (interchain with G-Cter in SUMO2); alternate cross-link involves residue lysine 706. Glycyl lysine isopeptide (Lys-Gly) (interchain with G-Cter in SUMO2) cross-links involve residues lysine 731 and lysine 748. The segment at 753–776 (FRCSLCSATAQNLTDMNTHIHQVH) adopts a C2H2-type 10 zinc-finger fold. Glycyl lysine isopeptide (Lys-Gly) (interchain with G-Cter in SUMO2) cross-links involve residues lysine 777, lysine 779, lysine 790, lysine 817, lysine 827, lysine 832, lysine 843, lysine 845, lysine 852, lysine 951, lysine 992, and lysine 993. The C2H2-type 11 zinc finger occupies 789–812 (IKCGTCTKAFHDPESAQQHFHRKH). Residues 1050 to 1061 (LEEAIRRSLEEM) are important for ubiquitin binding.

It belongs to the krueppel C2H2-type zinc-finger protein family. Homooligomer. Interacts (via N-terminal region) with SUMO1. Interacts (via N-terminal region) with SUMO2. Interacts simultaneously with two SUMO2 chains. Identified in a complex with SUMO2 and UBE2I/UBC9, where one ZNF451 interacts with one UBE2I/UBC9 and two SUMO2 chains, one bound to the UBE2I/UBC9 active site and the other to another region of the same UBE2I/UBC9 molecule. Interacts (via C-terminus) with ubiquitin. Interacts (via N-terminal zinc-finger domains) with SMAD4 (via MH2 domain). Interacts with SMAD2 and SMAD3. Identified in a complex that contains at least ZNF451, SMAD2, SMAD3 and SMAD4. Interacts with EP300. Inhibits interaction between EP300 and the SMAD4 complex. Interacts with SIMC1. Post-translationally, sumoylated. Predominantly sumoylated on the N-terminal region that is important for interaction with SUMO1 and SUMO2. Sumoylation is important for localization in nuclear granules; desumoylation leads to diffuse nucleoplasmic location. Autosumoylated (in vitro). Sumoylation enhances E3 SUMO-protein ligase activity.

It localises to the nucleus. Its subcellular location is the PML body. The protein localises to the nucleoplasm. It functions in the pathway protein modification; protein sumoylation. In terms of biological role, E3 SUMO-protein ligase; has a preference for SUMO2 and SUMO3 and facilitates UBE2I/UBC9-mediated sumoylation of target proteins. Plays a role in protein SUMO2 modification in response to stress caused by DNA damage and by proteasome inhibitors (in vitro). Required for MCM4 sumoylation. Has no activity with SUMO1. Preferentially transfers an additional SUMO2 chain onto the SUMO2 consensus site 'Lys-11'. Negatively regulates transcriptional activation mediated by the SMAD4 complex in response to TGF-beta signaling. Inhibits EP300-mediated acetylation of histone H3 at 'Lys-9'. Plays a role in regulating the transcription of AR targets. The protein is E3 SUMO-protein ligase ZNF451 (ZNF451) of Homo sapiens (Human).